An 888-amino-acid polypeptide reads, in one-letter code: Alanine--tRNA ligase (888 aa).

Zn(2+) is bound by residues His-564, His-568, Cys-676, and His-680.

Belongs to the class-II aminoacyl-tRNA synthetase family. Requires Zn(2+) as cofactor.

The protein resides in the cytoplasm. It catalyses the reaction tRNA(Ala) + L-alanine + ATP = L-alanyl-tRNA(Ala) + AMP + diphosphate. Its function is as follows. Catalyzes the attachment of alanine to tRNA(Ala) in a two-step reaction: alanine is first activated by ATP to form Ala-AMP and then transferred to the acceptor end of tRNA(Ala). Also edits incorrectly charged Ser-tRNA(Ala) and Gly-tRNA(Ala) via its editing domain. The protein is Alanine--tRNA ligase of Bartonella quintana (strain Toulouse) (Rochalimaea quintana).